The sequence spans 151 residues: 3-hydroxyacyl-[acyl-carrier-protein] dehydratase FabZ (151 aa).

His56 is an active-site residue.

This sequence belongs to the thioester dehydratase family. FabZ subfamily.

The protein localises to the cytoplasm. The enzyme catalyses a (3R)-hydroxyacyl-[ACP] = a (2E)-enoyl-[ACP] + H2O. Its function is as follows. Involved in unsaturated fatty acids biosynthesis. Catalyzes the dehydration of short chain beta-hydroxyacyl-ACPs and long chain saturated and unsaturated beta-hydroxyacyl-ACPs. This chain is 3-hydroxyacyl-[acyl-carrier-protein] dehydratase FabZ, found in Rhodopseudomonas palustris (strain HaA2).